The primary structure comprises 349 residues: uncharacterized protein (349 aa).

An N-terminal signal peptide occupies residues 1 to 25 (MNKYIKQGAPILGILLAVMFGGREG).

Belongs to the bacterial solute-binding protein 1 family. WtpA subfamily.

This is an uncharacterized protein from Methanococcus aeolicus (strain ATCC BAA-1280 / DSM 17508 / OCM 812 / Nankai-3).